The following is a 140-amino-acid chain: uncharacterized protein (140 aa).

N86 carries N-linked (GlcNAc...) asparagine; by host glycosylation. A helical transmembrane segment spans residues 92–112 (IFNGLGFILIVIFIYLLLITL).

The protein belongs to the asfivirus B117L family.

The protein localises to the host membrane. It localises to the virion. This is an uncharacterized protein from African swine fever virus (isolate Pig/Kenya/KEN-50/1950) (ASFV).